A 447-amino-acid chain; its full sequence is GTPase Der (447 aa).

EngA-type G domains are found at residues 3–167 and 181–354; these read PVVA…NLPD and IKLA…KSAT. GTP contacts are provided by residues 9–16, 56–60, 119–122, 187–194, 234–238, and 299–302; these read GRPNVGKS, DTGGF, NKAE, DTAGL, and NKWD. A KH-like domain is found at 355–439; it reads RKMSTPVLTR…PLRIQFKSSQ (85 aa).

Belongs to the TRAFAC class TrmE-Era-EngA-EngB-Septin-like GTPase superfamily. EngA (Der) GTPase family. As to quaternary structure, associates with the 50S ribosomal subunit.

GTPase that plays an essential role in the late steps of ribosome biogenesis. This is GTPase Der from Variovorax paradoxus (strain S110).